The chain runs to 398 residues: UDP-D-apiose/UDP-D-xylose synthase (398 aa).

Residue D57–D88 participates in NAD(+) binding. R190 contacts substrate. Y193 functions as the Proton acceptor in the catalytic mechanism. Y193–K197 lines the NAD(+) pocket. N222 serves as a coordination point for substrate. R243 is an NAD(+) binding site. Substrate is bound by residues V244–F248, V261–R268, and D345–R349.

Belongs to the NAD(P)-dependent epimerase/dehydratase family. In terms of assembly, homodimer. Requires NAD(+) as cofactor.

The protein localises to the cytoplasm. Catalyzes the conversion of UDP-D-glucuronate to a mixture of UDP-D-apiose and UDP-D-xylose. D-Apiose (3-C-hydroxymethyl-d-erythrose) is the only plant cell wall monosaccharide with a branched carbon skeleton and found in rhamnogalacturonan II (RG-II), apiogalacturonan, and several apioglycosides. The sequence is that of UDP-D-apiose/UDP-D-xylose synthase from Oryza sativa subsp. japonica (Rice).